Here is a 491-residue protein sequence, read N- to C-terminus: Glycogen synthase (491 aa).

Lys15 lines the ADP-alpha-D-glucose pocket.

Belongs to the glycosyltransferase 1 family. Bacterial/plant glycogen synthase subfamily.

It carries out the reaction [(1-&gt;4)-alpha-D-glucosyl](n) + ADP-alpha-D-glucose = [(1-&gt;4)-alpha-D-glucosyl](n+1) + ADP + H(+). It participates in glycan biosynthesis; glycogen biosynthesis. Synthesizes alpha-1,4-glucan chains using ADP-glucose. This chain is Glycogen synthase, found in Hydrogenovibrio crunogenus (strain DSM 25203 / XCL-2) (Thiomicrospira crunogena).